The primary structure comprises 294 residues: 4-hydroxy-tetrahydrodipicolinate synthase (294 aa).

Residue Thr45 participates in pyruvate binding. Tyr133 serves as the catalytic Proton donor/acceptor. Lys161 acts as the Schiff-base intermediate with substrate in catalysis. Ile203 is a binding site for pyruvate.

This sequence belongs to the DapA family. In terms of assembly, homotetramer; dimer of dimers.

It localises to the cytoplasm. It carries out the reaction L-aspartate 4-semialdehyde + pyruvate = (2S,4S)-4-hydroxy-2,3,4,5-tetrahydrodipicolinate + H2O + H(+). It participates in amino-acid biosynthesis; L-lysine biosynthesis via DAP pathway; (S)-tetrahydrodipicolinate from L-aspartate: step 3/4. Its function is as follows. Catalyzes the condensation of (S)-aspartate-beta-semialdehyde [(S)-ASA] and pyruvate to 4-hydroxy-tetrahydrodipicolinate (HTPA). This is 4-hydroxy-tetrahydrodipicolinate synthase from Buchnera aphidicola subsp. Acyrthosiphon pisum (strain APS) (Acyrthosiphon pisum symbiotic bacterium).